Consider the following 209-residue polypeptide: uncharacterized protein (209 aa).

This is an uncharacterized protein from Klebsiella pneumoniae.